The following is a 155-amino-acid chain: MSRRGTAEEKTAKSDPIYRNRLVNMLVNRILKHGKKSLAYQIVYQAVKKIQQKTETNPLSVLRQAICRVTPDIAVKARRVGGSTHQVPIEIGSTQGKALAIRWLLGASRKRPGRNMAFKLSSELVDAAKGSGDAIRKKEETHRMAEANRAFAHFR.

Belongs to the universal ribosomal protein uS7 family. Part of the 30S ribosomal subunit.

Its subcellular location is the plastid. The protein localises to the chloroplast. In terms of biological role, one of the primary rRNA binding proteins, it binds directly to 16S rRNA where it nucleates assembly of the head domain of the 30S subunit. The chain is Small ribosomal subunit protein uS7cz/uS7cy (rps7-A) from Calycanthus floridus var. glaucus (Eastern sweetshrub).